Consider the following 429-residue polypeptide: Histidine--tRNA ligase (429 aa).

It belongs to the class-II aminoacyl-tRNA synthetase family. Homodimer.

Its subcellular location is the cytoplasm. The catalysed reaction is tRNA(His) + L-histidine + ATP = L-histidyl-tRNA(His) + AMP + diphosphate + H(+). The sequence is that of Histidine--tRNA ligase from Prochlorococcus marinus subsp. pastoris (strain CCMP1986 / NIES-2087 / MED4).